A 380-amino-acid chain; its full sequence is Cytochrome b (380 aa).

Transmembrane regions (helical) follow at residues 34–54 (FGSL…LLAT), 78–99 (WLIR…YLHI), 114–134 (WNTG…GYVL), and 179–199 (FFAL…IHLA). 2 residues coordinate heme b: His-84 and His-98. Residues His-183 and His-197 each contribute to the heme b site. Residue His-202 participates in a ubiquinone binding. 4 helical membrane-spanning segments follow: residues 227-247 (LKDI…ALFS), 289-309 (LGGV…PFLH), 321-341 (LSQI…WIGS), and 348-368 (FIII…ILFP).

This sequence belongs to the cytochrome b family. The cytochrome bc1 complex contains 11 subunits: 3 respiratory subunits (MT-CYB, CYC1 and UQCRFS1), 2 core proteins (UQCRC1 and UQCRC2) and 6 low-molecular weight proteins (UQCRH/QCR6, UQCRB/QCR7, UQCRQ/QCR8, UQCR10/QCR9, UQCR11/QCR10 and a cleavage product of UQCRFS1). This cytochrome bc1 complex then forms a dimer. The cofactor is heme b.

It localises to the mitochondrion inner membrane. Component of the ubiquinol-cytochrome c reductase complex (complex III or cytochrome b-c1 complex) that is part of the mitochondrial respiratory chain. The b-c1 complex mediates electron transfer from ubiquinol to cytochrome c. Contributes to the generation of a proton gradient across the mitochondrial membrane that is then used for ATP synthesis. This Callipepla gambelii (Gambel's quail) protein is Cytochrome b (MT-CYB).